Here is a 440-residue protein sequence, read N- to C-terminus: UDP-N-acetylmuramoylalanine--D-glutamate ligase (440 aa).

128–134 (GTNGKTT) is an ATP binding site.

This sequence belongs to the MurCDEF family.

The protein localises to the cytoplasm. It carries out the reaction UDP-N-acetyl-alpha-D-muramoyl-L-alanine + D-glutamate + ATP = UDP-N-acetyl-alpha-D-muramoyl-L-alanyl-D-glutamate + ADP + phosphate + H(+). It functions in the pathway cell wall biogenesis; peptidoglycan biosynthesis. Functionally, cell wall formation. Catalyzes the addition of glutamate to the nucleotide precursor UDP-N-acetylmuramoyl-L-alanine (UMA). In Lawsonia intracellularis (strain PHE/MN1-00), this protein is UDP-N-acetylmuramoylalanine--D-glutamate ligase.